A 112-amino-acid chain; its full sequence is Thioredoxin (112 aa).

Residues 2–112 (SEDSATVAVT…ALLRELSDAL (111 aa)) enclose the Thioredoxin domain. Cysteine 35 and cysteine 38 are disulfide-bonded.

Belongs to the thioredoxin family.

Functionally, participates in various redox reactions through the reversible oxidation of its active center dithiol to a disulfide and catalyzes dithiol-disulfide exchange reactions. This chain is Thioredoxin (trxA), found in Mycolicibacterium smegmatis (Mycobacterium smegmatis).